Here is a 343-residue protein sequence, read N- to C-terminus: DNA-directed RNA polymerase subunit alpha (343 aa).

Residues 1–243 (MTQEIDEKIP…EQLDIFINFD (243 aa)) form an alpha N-terminal domain (alpha-NTD) region. Residues 261-343 (ENPYLDKPVE…NAPSDAETEE (83 aa)) are alpha C-terminal domain (alpha-CTD).

This sequence belongs to the RNA polymerase alpha chain family. Homodimer. The RNAP catalytic core consists of 2 alpha, 1 beta, 1 beta' and 1 omega subunit. When a sigma factor is associated with the core the holoenzyme is formed, which can initiate transcription.

It catalyses the reaction RNA(n) + a ribonucleoside 5'-triphosphate = RNA(n+1) + diphosphate. In terms of biological role, DNA-dependent RNA polymerase catalyzes the transcription of DNA into RNA using the four ribonucleoside triphosphates as substrates. The sequence is that of DNA-directed RNA polymerase subunit alpha from Desulfotalea psychrophila (strain LSv54 / DSM 12343).